We begin with the raw amino-acid sequence, 305 residues long: GMP synthase [glutamine-hydrolyzing] subunit B (305 aa).

The GMPS ATP-PPase domain occupies 2–184 (VNTERFIQQA…LGLPREIQHR (183 aa)). Position 29 to 35 (29 to 35 (SGGVDSS)) interacts with ATP.

As to quaternary structure, heterodimer composed of a glutamine amidotransferase subunit (A) and a GMP-binding subunit (B).

The catalysed reaction is XMP + L-glutamine + ATP + H2O = GMP + L-glutamate + AMP + diphosphate + 2 H(+). Its pathway is purine metabolism; GMP biosynthesis; GMP from XMP (L-Gln route): step 1/1. Catalyzes the synthesis of GMP from XMP. The sequence is that of GMP synthase [glutamine-hydrolyzing] subunit B from Methanosphaerula palustris (strain ATCC BAA-1556 / DSM 19958 / E1-9c).